Reading from the N-terminus, the 51-residue chain is Lysis protein for colicin A (51 aa).

Residues 1–18 (MKKIIICVILLAIMLLAA) form the signal peptide. C19 carries the N-palmitoyl cysteine lipid modification. C19 carries S-diacylglycerol cysteine lipidation. A disordered region spans residues 27-51 (TGGGSVSPSSIVTGVSMGSDGVGNP).

It is found in the cell outer membrane. In terms of biological role, lysis proteins are required for both colicin release and partial cell lysis. This chain is Lysis protein for colicin A (cal), found in Citrobacter freundii.